The primary structure comprises 228 residues: uncharacterized protein (228 aa).

This is an uncharacterized protein from Methanocaldococcus jannaschii (strain ATCC 43067 / DSM 2661 / JAL-1 / JCM 10045 / NBRC 100440) (Methanococcus jannaschii).